The following is a 665-amino-acid chain: MSSRKQLANAIRALSMDGVQKANSGHPGAPMGMADIAEVLWRSHLNHNPQNPNWADRDRFVLSNGHGSMLIYSLLHLSGYELSIDDLKNFRQLHSKTPGHPEYGYAPGIETTTGPLGQGITNAVGMAIAEKALAAQFNKPGHDIVDHFTYVFMGDGCLMEGISHEACSLAGTLGLGKLIAFWDDNGISIDGHVEGWFSDDTPKRFEAYGWHVIPAVDGHDADAINAAIEAAKAETSRPTLICTKTIIGFGSPNKAGSHDCHGAPLGNDEIKAAREFLGWEHAPFEIPADIYAAWDAKQAGASKEAAWNEKFAAYAKAYPAEAAEYKRRVAGELPANWEAATSEIIANLQANPANIASRKASQNALEAFGKLLPEFMGGSADLAPSNLTMWSGSKSLTAEDASGNYIHYGVREFGMTAIINGIALHGGFVPYGATFLMFMEYARNAMRMAALMKVQNIQVYTHDSIGLGEDGPTHQPVEQIASLRMTPNMSTWRPCDQVESAVAWKLAIERKDAPSALIFSRQNLAQQPRSAEQVANIAKGGYILKDCAGQPELILIATGSEVELAVAAYEQLSAEGKAVRVVSMPSTDAFDKQDAAYREAVLPAAVTKRIAIEAGIADFWYKYVGFGGRIIGMTSFGESAPAGELFKLFGFTTENVVKQAKELLA.

His-26 serves as a coordination point for substrate. Residues His-66 and 114–116 each bind thiamine diphosphate; that span reads GPL. Position 155 (Asp-155) interacts with Mg(2+). Residues Gly-156 and Asn-185 each coordinate thiamine diphosphate. Positions 185 and 187 each coordinate Mg(2+). Residues His-261, Arg-358, and Ser-385 each coordinate substrate. Residue His-261 participates in thiamine diphosphate binding. The Proton donor role is filled by Glu-412. Phe-438 lines the thiamine diphosphate pocket. Substrate contacts are provided by His-462, Asp-470, and Arg-521.

It belongs to the transketolase family. In terms of assembly, homodimer. The cofactor is Mg(2+). Ca(2+) is required as a cofactor. It depends on Mn(2+) as a cofactor. Co(2+) serves as cofactor. Requires thiamine diphosphate as cofactor.

It catalyses the reaction D-sedoheptulose 7-phosphate + D-glyceraldehyde 3-phosphate = aldehydo-D-ribose 5-phosphate + D-xylulose 5-phosphate. Catalyzes the transfer of a two-carbon ketol group from a ketose donor to an aldose acceptor, via a covalent intermediate with the cofactor thiamine pyrophosphate. This is Transketolase 1 (tkt1) from Vibrio cholerae serotype O1 (strain ATCC 39315 / El Tor Inaba N16961).